Here is a 235-residue protein sequence, read N- to C-terminus: N-alpha-acetyltransferase 10 (235 aa).

Methionine 1 carries the post-translational modification N-acetylmethionine. The interaction with NAA15 stretch occupies residues 1–58 (MNIRNARPEDLMNMQHCNLLCLPENYQMKYYFYHGLSWPQLSYIAEDENGKIVGYVLA). The N-acetyltransferase domain occupies 1-152 (MNIRNARPED…DAYAMKRDLT (152 aa)). Lysine 136 carries the N6-acetyllysine; by autocatalysis modification. Residues 178–235 (NKVESKGNSPPSSGEACREEKGLAAEDSGGDSKDLSEVSETTESTDVKDSSEASDSAS) are disordered. A phosphoserine mark is found at serine 182, serine 186, and serine 205. Basic and acidic residues predominate over residues 193-213 (ACREEKGLAAEDSGGDSKDLS). Serine 209 carries the phosphoserine; by IKKB modification. Phosphoserine is present on residues serine 213 and serine 216.

The protein belongs to the acetyltransferase family. ARD1 subfamily. As to quaternary structure, component of the N-terminal acetyltransferase A complex (also called the NatA complex) composed of NAA10 and NAA15. Within the complex interacts with NAA15. Component of the N-terminal acetyltransferase A (NatA)/HYPK complex at least composed of NAA10, NAA15 and HYPK, which has N-terminal acetyltransferase activity. In complex with NAA15, interacts with HYPK. Component of the N-terminal acetyltransferase E (NatE) complex at least composed of NAA10, NAA15 and NAA50. Within the complex interacts with NAA15; the interaction is required for binding to NAAT50. Interacts with NAAT50. The interaction of the NatA complex with NAA50 reduces the acetylation activity of the NatA complex. Component of the N-terminal acetyltransferase E (NatE)/HYPK complex at least composed of NAA10, NAA15, NAA50 and HYPK. In complex with NAA15, interacts with HYPK; the interaction with HYPK reduces the capacity of the NatA complex to interact with NAA50. Interacts with HIF1A (via its ODD domain); the interaction increases HIF1A protein stability during normoxia, an down-regulates it when induced by hypoxia. Interacts with the ribosome. Binds to MYLK. Interacts with NAA16. Interacts (via its C-terminal domain) with TSC2, leading to its acetylation. Interacts with IKBKB. Interacts with HSPA1A and HSPA1B leading to its acetylation. Post-translationally, cleaved by caspases during apoptosis. Phosphorylation by IKBKB/IKKB at Ser-209 promotes its proteasome-mediated degradation. In terms of processing, autoacetylated at Lys-136 which stimulates its catalytic activity. In terms of tissue distribution, ubiquitous.

Its subcellular location is the cytoplasm. It localises to the nucleus. It catalyses the reaction N-terminal glycyl-[protein] + acetyl-CoA = N-terminal N(alpha)-acetylglycyl-[protein] + CoA + H(+). It carries out the reaction N-terminal L-alanyl-[protein] + acetyl-CoA = N-terminal N(alpha)-acetyl-L-alanyl-[protein] + CoA + H(+). The enzyme catalyses N-terminal L-seryl-[protein] + acetyl-CoA = N-terminal N(alpha)-acetyl-L-seryl-[protein] + CoA + H(+). The catalysed reaction is N-terminal L-valyl-[protein] + acetyl-CoA = N-terminal N(alpha)-acetyl-L-valyl-[protein] + CoA + H(+). It catalyses the reaction N-terminal L-cysteinyl-[protein] + acetyl-CoA = N-terminal N(alpha)-acetyl-L-cysteinyl-[protein] + CoA + H(+). It carries out the reaction N-terminal L-threonyl-[protein] + acetyl-CoA = N-terminal N(alpha)-acetyl-L-threonyl-[protein] + CoA + H(+). Its function is as follows. Catalytic subunit of N-terminal acetyltransferase complexes which display alpha (N-terminal) acetyltransferase activity. Acetylates amino termini that are devoid of initiator methionine. The alpha (N-terminal) acetyltransferase activity may be important for vascular, hematopoietic and neuronal growth and development. Without NAA15, displays epsilon (internal) acetyltransferase activity towards HIF1A, thereby promoting its degradation. Represses MYLK kinase activity by acetylation, and thus represses tumor cell migration. Acetylates, and stabilizes TSC2, thereby repressing mTOR activity and suppressing cancer development. Acetylates HSPA1A and HSPA1B at 'Lys-77' which enhances its chaperone activity and leads to preferential binding to co-chaperone HOPX. Acetylates HIST1H4A. Acts as a negative regulator of sister chromatid cohesion during mitosis. The sequence is that of N-alpha-acetyltransferase 10 (NAA10) from Homo sapiens (Human).